The primary structure comprises 294 residues: Shikimate kinase (294 aa).

87-97 is a binding site for ATP; that stretch reads PLAGGLKSSSA.

It belongs to the GHMP kinase family. Archaeal shikimate kinase subfamily.

It is found in the cytoplasm. The catalysed reaction is shikimate + ATP = 3-phosphoshikimate + ADP + H(+). The protein operates within metabolic intermediate biosynthesis; chorismate biosynthesis; chorismate from D-erythrose 4-phosphate and phosphoenolpyruvate: step 5/7. This Methanosarcina acetivorans (strain ATCC 35395 / DSM 2834 / JCM 12185 / C2A) protein is Shikimate kinase (aroK).